The following is a 168-amino-acid chain: uncharacterized protein (168 aa).

Low complexity predominate over residues 1–15; the sequence is MKRIISSSKSLKQLS. The tract at residues 1–107 is disordered; sequence MKRIISSSKS…NNNNNNNNNN (107 aa). The span at 33-47 shows a compositional bias: acidic residues; that stretch reads SDSDSDSDSDSDSDS. Residues 48–107 show a composition bias toward low complexity; it reads DSNSNSNSNSNSNSNSNSNSNSNSNSNNNNNNTNNNNNNNNNNNNNNNNNNNNNNNNNNN.

This is an uncharacterized protein from Dictyostelium discoideum (Social amoeba).